The following is a 202-amino-acid chain: Probable thymidylate kinase (202 aa).

13–20 (GIDGSGKT) lines the ATP pocket.

The protein belongs to the thymidylate kinase family.

The catalysed reaction is dTMP + ATP = dTDP + ADP. The protein is Probable thymidylate kinase of Picrophilus torridus (strain ATCC 700027 / DSM 9790 / JCM 10055 / NBRC 100828 / KAW 2/3).